The sequence spans 72 residues: Sec-independent protein translocase protein TatA (72 aa).

Residues 1-21 (MPFGLGLPEILVIGVIALLIF) traverse the membrane as a helical segment. The interval 41 to 72 (KSGVSDEPAPQQSASKETAPNPPQSLPSGKDS) is disordered.

It belongs to the TatA/E family. Forms a complex with TatC.

It is found in the cell inner membrane. Functionally, part of the twin-arginine translocation (Tat) system that transports large folded proteins containing a characteristic twin-arginine motif in their signal peptide across membranes. TatA could form the protein-conducting channel of the Tat system. The sequence is that of Sec-independent protein translocase protein TatA from Gloeobacter violaceus (strain ATCC 29082 / PCC 7421).